We begin with the raw amino-acid sequence, 345 residues long: RNA polymerase II holoenzyme cyclin-like subunit (345 aa).

Residues 23–147 form the Cyclin N-terminal domain; the sequence is ESRRKLLLLE…KLAEFEFYLI (125 aa).

This sequence belongs to the cyclin family. Cyclin C subfamily. Component of the SRB8-11 complex, a regulatory module of the Mediator complex.

It localises to the nucleus. In terms of biological role, component of the SRB8-11 complex. The SRB8-11 complex is a regulatory module of the Mediator complex which is itself involved in regulation of basal and activated RNA polymerase II-dependent transcription. The SRB8-11 complex may be involved in the transcriptional repression of a subset of genes regulated by Mediator. It may inhibit the association of the Mediator complex with RNA polymerase II to form the holoenzyme complex. The SRB8-11 complex phosphorylates the C-terminal domain (CTD) of the largest subunit of RNA polymerase II. The sequence is that of RNA polymerase II holoenzyme cyclin-like subunit (SSN8) from Debaryomyces hansenii (strain ATCC 36239 / CBS 767 / BCRC 21394 / JCM 1990 / NBRC 0083 / IGC 2968) (Yeast).